A 233-amino-acid polypeptide reads, in one-letter code: Flagellar calcium-binding protein TB-17 (233 aa).

Residues 1 to 11 (MGCSGSKNASN) are compositionally biased toward polar residues. Residues 1-29 (MGCSGSKNASNPKDGAASKGGKDGKTTAD) are disordered. The span at 20-29 (GGKDGKTTAD) shows a compositional bias: basic and acidic residues. EF-hand domains lie at 48-83 (ESKS…ILKL), 130-165 (YDIF…LKEW), and 167-202 (VDIT…KKLQ). Aspartate 61, asparagine 63, threonine 65, lysine 67, glutamate 72, aspartate 143, aspartate 145, serine 147, glutamate 154, aspartate 180, asparagine 182, serine 184, and glutamate 191 together coordinate Ca(2+). Residues 203 to 233 (VSGDPDDEENGANEGDGANAGDGVPAAEGSA) form a disordered region. The span at 214–225 (ANEGDGANAGDG) shows a compositional bias: low complexity.

The protein belongs to the calflagin family.

It is found in the cell projection. The protein localises to the cilium. It localises to the flagellum. In terms of biological role, may contribute to the rapid motility of the trypanosomes, playing a role either in flagellar structure or in calcium metabolism. Could alternate between a GDP-bound inactive form to a calcium/GTP-bound active form. In Trypanosoma brucei brucei, this protein is Flagellar calcium-binding protein TB-17 (FCABP).